The sequence spans 281 residues: MKLHIISGVSGSGKSIALHALEDRDYYCIDNLPIYLLPTFAKRMQRDARQLRAAIGIDARNLPQELRQFPQILEEIERAGVHCHIIFLDASDTTLLKRFSETRRKHPLSHIPLAEAIHCERALLGTIAEKADLRIDTTCTTIHQLRDLISERIGDDARPGMSLLFQSFGYKHGVPLDADFVFDVRCLPNPHWEPHLRPLSGRDSEVIAYLKRHETVTQMQQDLITFLQHWLQRFQNTNRSYLTVAIGCTGGQHRSVYLAEQLKAHFHSLHARVLCRHRELS.

Position 8 to 15 (8 to 15 (GVSGSGKS)) interacts with ATP. A GTP-binding site is contributed by 58–61 (DARN).

Belongs to the RapZ-like family.

Functionally, displays ATPase and GTPase activities. The chain is Nucleotide-binding protein Noc_2797 from Nitrosococcus oceani (strain ATCC 19707 / BCRC 17464 / JCM 30415 / NCIMB 11848 / C-107).